Consider the following 523-residue polypeptide: FAD-dependent monooxygenase drtC (523 aa).

Residues 77 to 252 (TSLNSACIVL…TNFEVRAFPQ (176 aa)) form the FAD-binding PCMH-type domain.

Belongs to the oxygen-dependent FAD-linked oxidoreductase family. It depends on FAD as a cofactor.

It participates in secondary metabolite biosynthesis; terpenoid biosynthesis. In terms of biological role, FAD-dependent monooxygenase; part of the gene cluster that mediates the biosynthesis of various drimane-type sesquiterpene esters, compounds that exhibit diverse biological activities and are widely present in eukaryotes. The pathway begins with the synthesis of the backbone drimenol by the terpene cyclase drtB using farnesyl pyrophosphate (FPP) as substrate. The cytochrome P450 monooxygenase drtD is then responsible for the hydroxylations at C-6, C-9 and C-12, as well as the oxidation of hydroxyl groups at C-6 and C-11 to a ketone and an aldehyde, respectively. Then, the biosynthesis can go in two directions, either the hydroxylated drimenol is further hydroxylated at C-2 and C-3 by an enzyme(s) not associated with the drt cluster, or the FAD-binding oxidoreductase drtC further oxidizes C-11 or C-12 to form the butyrolactone ring. DrtB, drtD and drtC are solely responsible for the formation of the different drimane structures observed during drimane sesquiterpenes biosynthesis. The polyketide synthase drtA synthesizes different lengths (C6 and C8) of PKS chains, which are then oxidized to varying degrees by the short-chain dehydrogenase drtF. Finally, these PKS chains are transferred onto drimane sesquiterpenes by the acyltransferase drtE, forming the sesquiterpene esters. In addition to the different fatty acyl-CoA chains produced by drtA, drtE is also able to use cinnamoyl-CoA as a substrate. In Aspergillus calidoustus, this protein is FAD-dependent monooxygenase drtC.